Consider the following 404-residue polypeptide: Serine/threonine transporter SstT (404 aa).

A run of 8 helical transmembrane segments spans residues I17–F37, I39–L59, M75–L95, A138–L158, I179–I199, F212–I232, I287–L307, and F313–A333.

The protein belongs to the dicarboxylate/amino acid:cation symporter (DAACS) (TC 2.A.23) family.

It localises to the cell membrane. The catalysed reaction is L-serine(in) + Na(+)(in) = L-serine(out) + Na(+)(out). It carries out the reaction L-threonine(in) + Na(+)(in) = L-threonine(out) + Na(+)(out). Its function is as follows. Involved in the import of serine and threonine into the cell, with the concomitant import of sodium (symport system). The chain is Serine/threonine transporter SstT from Streptococcus pyogenes serotype M1.